The primary structure comprises 131 residues: Large ribosomal subunit protein bL17 (131 aa).

It belongs to the bacterial ribosomal protein bL17 family. Part of the 50S ribosomal subunit. Contacts protein L32.

The polypeptide is Large ribosomal subunit protein bL17 (Vesicomyosocius okutanii subsp. Calyptogena okutanii (strain HA)).